A 445-amino-acid polypeptide reads, in one-letter code: StAR-related lipid transfer protein 3 (445 aa).

Over 1 to 51 (MSKLPGELARDLECSLPAVASLGSSLSHSQSLSSHLLPPPEKRRAISDVRR) the chain is Cytoplasmic. One can recognise an MENTAL domain in the interval 46 to 217 (ISDVRRTFCL…YSPPESFAGS (172 aa)). The chain crosses the membrane as a helical span at residues 52-72 (TFCLFVTFDLLFISLLWIIEL). Residues 73-94 (NTNTGIRKNLEQEIIQYNFKTS) are Extracellular-facing. A helical membrane pass occupies residues 95–115 (FFDIFVLAFFRFSGLLLGYAV). At 116 to 120 (LRLQH) the chain is on the cytoplasmic side. The helical transmembrane segment at 121–141 (WWVIAVTTLVSSAFLIVKVIL) threads the bilayer. At 142–148 (SELLSKG) the chain is on the extracellular side. The helical transmembrane segment at 149 to 169 (AFGYLLPIVSFVLAWLETWFL) threads the bilayer. Residues 170-445 (DFKVLPQEAE…QRISELGARA (276 aa)) lie on the Cytoplasmic side of the membrane. 2 consecutive short sequence motifs (FFAT) follow at residues 206–212 (QFYSPPE) and 207–212 (FYSPPE). Phosphoserine is present on residues Ser209, Ser217, and Ser221. An START domain is found at 248–443 (VVDQILAQEE…LRQRISELGA (196 aa)).

Belongs to the STARD3 family. As to quaternary structure, homodimer. Interacts (via the MENTAL domain) with STARD3NL. Interacts (via phosphorylated FFAT motif) with VAPA (via MSP domain). Interacts (via phosphorylated FFAT motif) with VAPB (via MSP domain). Interacts (via phosphorylated FFAT motif) with MOSPD2 (via MSP domain); this interaction allows enrichment of MOSPD2 around endosomes. Post-translationally, phosphorylation at Ser-209 is necessary and sufficient for the direct interaction of the phosphorylated FFAT motif with the MSP domain of MOSPD2, VAPA and VAPB and allows the tethering of two membranes that participates in the formation of ER-endosome contacts. Phosphorylation of the FFAT motif leads to conformation changes. Additional phosphorylations around the core FFAT motif (QFYSPPE) are not essential but strengthen the interaction with MOSPD2, VAPA and VAPB. Phosphorylation at Ser-209 of FFAT motif drives membrane tethering between the endoplasmic reticulum and late endosomes via interaction with VAPA and VAPB that in turn allows the efficient transport of sterol mediated by the START domain. As to expression, present in retina. Localizes to all neurons of macular retina and especially cone inner segments and axons (at protein level).

It localises to the late endosome membrane. It carries out the reaction cholesterol(in) = cholesterol(out). In terms of biological role, sterol-binding protein that mediates cholesterol transport from the endoplasmic reticulum to endosomes. The sterol transport mechanism is triggered by phosphorylation of FFAT motif that leads to membrane tethering between the endoplasmic reticulum and late endosomes via interaction with VAPA and VAPB. Acts as a lipid transfer protein that redirects sterol to the endosome at the expense of the cell membrane and favors membrane formation inside endosomes. May also mediate cholesterol transport between other membranes, such as mitochondria membrane or cell membrane. However, such results need additional experimental evidences; probably mainly mediates cholesterol transport from the endoplasmic reticulum to endosomes. Does not activate transcriptional cholesterol sensing. Able to bind other lipids, such as lutein, a xanthophyll carotenoids that form the macular pigment of the retina. Able to bind other lipids, such as lutein, a xanthophyll carotenoids that form the macular pigment of the retina. The protein is StAR-related lipid transfer protein 3 of Macaca mulatta (Rhesus macaque).